The chain runs to 983 residues: UPF0182 protein CMM_1204 (983 aa).

Helical transmembrane passes span 16–36 (LAIT…FAGF), 56–76 (WGAG…PVFV), 108–128 (LAMF…ASSG), 161–181 (FYHA…LGVL), 205–225 (IQIA…IWLD), 255–275 (AILA…AVIG), and 281–301 (IIGT…YPAI). Over residues 699 to 714 (QDLWTTPNDPTATTEA) the composition is skewed to polar residues. Disordered regions lie at residues 699–718 (QDLW…GTPA) and 884–936 (DSGA…AQDV). A compositionally biased stretch (gly residues) spans 902–918 (GGTGDGATDGATDGGTG). Residues 919–933 (STPTPAPTTSPSAPA) are compositionally biased toward low complexity.

It belongs to the UPF0182 family.

Its subcellular location is the cell membrane. The protein is UPF0182 protein CMM_1204 of Clavibacter michiganensis subsp. michiganensis (strain NCPPB 382).